The following is a 939-amino-acid chain: Translation initiation factor IF-2 (939 aa).

Residues 57-274 are disordered; sequence RLKPAAPAAP…APTKKNEQKI (218 aa). Basic and acidic residues-rich tracts occupy residues 83–122 and 129–138; these read MEPK…KESV and LEQEPPKEEL. 2 stretches are compositionally biased toward polar residues: residues 146–158 and 170–180; these read ESAS…SNPL and VATTLATQTDA. A compositionally biased stretch (basic and acidic residues) spans 208–227; sequence KRSEEPAPKADRPSLEEART. Basic residues predominate over residues 252 to 262; it reads ARKKKKEKKKP. The region spanning 438–607 is the tr-type G domain; it reads ERPPVVTIMG…LVQSELLELK (170 aa). The G1 stretch occupies residues 447–454; the sequence is GHVDHGKT. GTP is bound at residue 447-454; sequence GHVDHGKT. The tract at residues 472 to 476 is G2; sequence GITQH. The segment at 493 to 496 is G3; sequence DTPG. GTP is bound by residues 493-497 and 547-550; these read DTPGH and NKVD. The interval 547–550 is G4; that stretch reads NKVD. Residues 583 to 585 are G5; sequence SAK.

It belongs to the TRAFAC class translation factor GTPase superfamily. Classic translation factor GTPase family. IF-2 subfamily.

Its subcellular location is the cytoplasm. In terms of biological role, one of the essential components for the initiation of protein synthesis. Protects formylmethionyl-tRNA from spontaneous hydrolysis and promotes its binding to the 30S ribosomal subunits. Also involved in the hydrolysis of GTP during the formation of the 70S ribosomal complex. This chain is Translation initiation factor IF-2, found in Wolinella succinogenes (strain ATCC 29543 / DSM 1740 / CCUG 13145 / JCM 31913 / LMG 7466 / NCTC 11488 / FDC 602W) (Vibrio succinogenes).